The sequence spans 729 residues: ATP-dependent RNA helicase DHX15 homolog (729 aa).

Residues 1-25 (MSKRRIEVGETYGSKAKKDPEASSS) are disordered. Residues 82–246 (MRLLSLHQCI…FDNAPLMKVP (165 aa)) form the Helicase ATP-binding domain. ATP is bound at residue 95–102 (GETGSGKT). The short motif at 193–196 (DEAH) is the DEAH box element. The Helicase C-terminal domain maps to 271–451 (TVIQIHMCEE…TVVLQLKKLG (181 aa)).

Belongs to the DEAD box helicase family. DEAH subfamily. DDX15/PRP43 sub-subfamily.

It catalyses the reaction ATP + H2O = ADP + phosphate + H(+). Functionally, RNA helicase involved in mRNA processing and antiviral innate immunity. Acts as an activator of the p38 MAPK cascade. The polypeptide is ATP-dependent RNA helicase DHX15 homolog (Drosophila melanogaster (Fruit fly)).